A 564-amino-acid polypeptide reads, in one-letter code: Arginine--tRNA ligase (564 aa).

The 'HIGH' region motif lies at 122–132 (PNIAKPFSIGH).

It belongs to the class-I aminoacyl-tRNA synthetase family. As to quaternary structure, monomer.

It localises to the cytoplasm. It carries out the reaction tRNA(Arg) + L-arginine + ATP = L-arginyl-tRNA(Arg) + AMP + diphosphate. In Lactococcus lactis subsp. lactis (strain IL1403) (Streptococcus lactis), this protein is Arginine--tRNA ligase.